We begin with the raw amino-acid sequence, 592 residues long: Frizzled-9 (592 aa).

Positions 1-23 are cleaved as a signal peptide; that stretch reads MAVPPLLRGALLLWQLLATGGAA. The Extracellular segment spans residues 24–230; that stretch reads LEIGRFDPER…EVFWSRRDKD (207 aa). The FZ domain maps to 35–156; sequence RGPAPCQAME…NDPHALCMEA (122 aa). 5 cysteine pairs are disulfide-bonded: C40–C101, C48–C94, C85–C123, C112–C153, and C116–C140. N-linked (GlcNAc...) asparagine glycosylation is present at N54. The segment at 59 to 173 is required for Wnt-activated receptor activity; that stretch reads PNLLGHTSQG…PTEPHKGLGM (115 aa). A glycan (N-linked (GlcNAc...) asparagine) is linked at N159. The helical transmembrane segment at 231 to 251 threads the bilayer; the sequence is FALVWMAVWSALCFFSTAFTV. Over 252–267 the chain is Cytoplasmic; sequence FTFLLEPHRFQYPERP. Residues 268-288 traverse the membrane as a helical segment; that stretch reads IIFLSMCYNVYSLAFLIRAVA. Over 289–316 the chain is Extracellular; sequence GAQSVACDQEAGALYVIQEGLENTGCTL. Residues 317–337 traverse the membrane as a helical segment; that stretch reads VFLLLYYFGMASSLWWVVLTL. Topologically, residues 338 to 356 are cytoplasmic; the sequence is TWFLAAGKKWGHEAIEAHG. The chain crosses the membrane as a helical span at residues 357-377; sequence SYFHMAAWGLPALKTIVVLTL. The Extracellular portion of the chain corresponds to 378-401; the sequence is RKVAGDELTGLCYVASMDPAALTG. Residues 402–422 form a helical membrane-spanning segment; sequence FVLVPLSCYLVLGTSFLLTGF. The Cytoplasmic portion of the chain corresponds to 423-448; that stretch reads VALFHIRKIMKTGGTNTEKLEKLMVK. The chain crosses the membrane as a helical span at residues 449-469; sequence IGVFSILYTVPATCVIVCYVY. At 470–509 the chain is on the extracellular side; the sequence is ERLNMDFWRLRATEQPCTAATVPGGRRDCSLPGGSVPTVA. The helical transmembrane segment at 510 to 530 threads the bilayer; sequence VFMLKIFMSLVVGITSGVWVW. Residues 531-592 are Cytoplasmic-facing; that stretch reads SSKTFQTWQS…DPSLENPTHL (62 aa). The Lys-Thr-X-X-X-Trp motif, mediates interaction with the PDZ domain of Dvl family members motif lies at 533 to 538; that stretch reads KTFQTW. A required for CTNNB1 accumulation and TCF transcription factor activity region spans residues 555–592; it reads ACRTPGGYGRGTHCHYKAPTVVLHMTKTDPSLENPTHL.

It belongs to the G-protein coupled receptor Fz/Smo family. In terms of processing, ubiquitinated by ZNRF3, leading to its degradation by the proteasome. As to expression, in the embryo, found in the neural tube, trunk skeletal muscle precursors (myotomes), limb skeletal anlagen, craniofacial regions and nephric ducts. In the adult, expression is abundant in heart, brain, testis and skeletal muscle. In the testis, expressed in all spermatogenic cell types. Lower levels in adult lung, liver and kidney. Barely detectable in spleen. Expressed also in chondrocytes.

Its subcellular location is the cell membrane. Its function is as follows. Receptor for WNT2 that is coupled to the beta-catenin canonical signaling pathway, which leads to the activation of disheveled proteins, inhibition of GSK-3 kinase, nuclear accumulation of beta-catenin and activation of Wnt target genes. Plays a role in neuromuscular junction (NMJ) assembly by negatively regulating the clustering of acetylcholine receptors (AChR) through the beta-catenin canonical signaling pathway. May play a role in neural progenitor cells (NPCs) viability through the beta-catenin canonical signaling pathway by negatively regulating cell cycle arrest leading to inhibition of neuron apoptotic process. During hippocampal development, regulates neuroblast proliferation and apoptotic cell death. Controls bone formation through non canonical Wnt signaling mediated via ISG15. Positively regulates bone regeneration through non canonical Wnt signaling. The sequence is that of Frizzled-9 (Fzd9) from Mus musculus (Mouse).